The following is a 273-amino-acid chain: Ribosomal RNA small subunit methyltransferase A (273 aa).

Positions 18, 20, 45, 66, 91, and 113 each coordinate S-adenosyl-L-methionine.

This sequence belongs to the class I-like SAM-binding methyltransferase superfamily. rRNA adenine N(6)-methyltransferase family. RsmA subfamily.

It is found in the cytoplasm. It carries out the reaction adenosine(1518)/adenosine(1519) in 16S rRNA + 4 S-adenosyl-L-methionine = N(6)-dimethyladenosine(1518)/N(6)-dimethyladenosine(1519) in 16S rRNA + 4 S-adenosyl-L-homocysteine + 4 H(+). Functionally, specifically dimethylates two adjacent adenosines (A1518 and A1519) in the loop of a conserved hairpin near the 3'-end of 16S rRNA in the 30S particle. May play a critical role in biogenesis of 30S subunits. In Citrobacter koseri (strain ATCC BAA-895 / CDC 4225-83 / SGSC4696), this protein is Ribosomal RNA small subunit methyltransferase A.